A 358-amino-acid chain; its full sequence is Fructose-bisphosphate aldolase 6, cytosolic (358 aa).

S2 bears the N-acetylserine mark. Position 39 (R39) interacts with substrate. The residue at position 68 (C68) is an S-glutathionyl cysteine; transient. Position 173 is an S-glutathionyl cysteine; transient; alternate (C173). Residue C173 is modified to S-nitrosocysteine; transient; alternate. The active-site Proton acceptor is the E183. K225 functions as the Schiff-base intermediate with dihydroxyacetone-P in the catalytic mechanism. Residues 266 to 268 (SGG) and R298 each bind substrate. The residue at position 350 (S350) is a Phosphoserine. Residue K354 is modified to N6,N6,N6-trimethyllysine.

Belongs to the class I fructose-bisphosphate aldolase family. As to quaternary structure, homotetramer. Interacts with TRX1 and TRX3. Interacts with GAPC1 and VDAC3. In terms of processing, S-glutathionylated at Cys-68 and Cys-173. Post-translationally, S-nitrosylated at Cys-173. As to expression, expressed in roots, rosettes leaves, cauline leaves, stems and flowers.

It is found in the cytoplasm. The protein resides in the cytosol. It localises to the nucleus. The protein localises to the mitochondrion. The catalysed reaction is beta-D-fructose 1,6-bisphosphate = D-glyceraldehyde 3-phosphate + dihydroxyacetone phosphate. It participates in carbohydrate degradation; glycolysis; D-glyceraldehyde 3-phosphate and glycerone phosphate from D-glucose: step 4/4. With respect to regulation, total and irreversible inhibition by S-nitrosoglutathione (GSNO). Partial and reversible inhibition by oxidized glutathione (GSSG). Its function is as follows. Fructose-bisphosphate aldolase that plays a key role in glycolysis and gluconeogenesis. Associates with GAPC1 to the outer mitochondrial membrane, in a redox-dependent manner, leading to binding and bundling of actin. Actin binding and bundling occurs under oxidizing conditions and is reversible under reducing conditions. May be part of a redox-dependent retrograde signal transduction network for adaptation upon oxidative stress. The protein is Fructose-bisphosphate aldolase 6, cytosolic of Arabidopsis thaliana (Mouse-ear cress).